The chain runs to 227 residues: Izumo sperm-egg fusion protein 4 (227 aa).

A signal peptide spans 1 to 24 (MFGQGRLGQAMALLLFLGMTAALA). N-linked (GlcNAc...) asparagine glycans are attached at residues N153 and N214.

It belongs to the Izumo family.

It localises to the secreted. The protein is Izumo sperm-egg fusion protein 4 (Izumo4) of Mus musculus (Mouse).